A 386-amino-acid polypeptide reads, in one-letter code: Terpene cyclase 6 (386 aa).

The Mg(2+) site is built by Asp128, Asn276, and Ser280. Residues 128-132 (DDEID) carry the D(D/E)XX(D/E) motif motif. An NSE motif motif is present at residues 276–284 (NEILSLQKE). The WxxxxxRY motif motif lies at 360 to 367 (WSYNCERY). 2 residues coordinate (2E,6E)-farnesyl diphosphate: Arg366 and Tyr367.

It belongs to the terpene synthase family. In terms of assembly, homodimer. Mg(2+) serves as cofactor.

It carries out the reaction (2E,6E)-farnesyl diphosphate + H2O = trichobrasilenol + diphosphate. The enzyme catalyses (2E,6E)-farnesyl diphosphate = alpha-humulene + diphosphate. It catalyses the reaction (2E,6E)-farnesyl diphosphate = (-)-(E)-beta-caryophyllene + diphosphate. The catalysed reaction is (2E,6E)-farnesyl diphosphate = (E)-2-epi-beta-caryophyllene + diphosphate. It carries out the reaction (2E,6E)-farnesyl diphosphate + H2O = (+)-isoafricanol + diphosphate. The enzyme catalyses (2E,6E)-farnesyl diphosphate + H2O = (+)-(2S,3R,9R)-pristinol + diphosphate. It catalyses the reaction (2E,6E)-farnesyl diphosphate = african-3-ene + diphosphate. The catalysed reaction is (2E,6E)-farnesyl diphosphate = african-1-ene + diphosphate. The protein operates within sesquiterpene biosynthesis. Its function is as follows. Terpene cyclase that is able to convert FPP into a mixture of sesquiterpene hydrocarbons and alcohols. The main product is trichobrasilenol. Additionally, side products include alpha-humulene, caryophyllene, 2-epi-caryophyllene, african-3-ene, african-1-ene, isoafricanol and pristinol. Does not accept GPP, GGPP, and GFPP as substrates. This is Terpene cyclase 6 from Hypocrea atroviridis (Trichoderma atroviride).